A 512-amino-acid polypeptide reads, in one-letter code: Protein disulfide-isomerase (512 aa).

Residues 1–24 (MAKNVAIFGLLFSLLLLVPSQIFA) form the signal peptide. Positions 25 to 144 (EESSTDAKEF…IVEYLKKQSG (120 aa)) constitute a Thioredoxin 1 domain. Active-site nucleophile residues include Cys-62 and Cys-65. An intrachain disulfide couples Cys-62 to Cys-65. N-linked (GlcNAc...) asparagine glycosylation occurs at Asn-278. The 129-residue stretch at 357–485 (YKDGKVEPFV…IIEFIEKNKD (129 aa)) folds into the Thioredoxin 2 domain. Active-site nucleophile residues include Cys-407 and Cys-410. Cys-407 and Cys-410 are disulfide-bonded. The segment covering 487-496 (TGAAHQEVEQ) has biased composition (basic and acidic residues). Residues 487–512 (TGAAHQEVEQPKAAAQPEAEQPKDEL) are disordered. Residues 509–512 (KDEL) carry the Prevents secretion from ER motif.

The protein belongs to the protein disulfide isomerase family.

It is found in the endoplasmic reticulum lumen. The catalysed reaction is Catalyzes the rearrangement of -S-S- bonds in proteins.. In terms of biological role, participates in the folding of proteins containing disulfide bonds, may be involved in glycosylation, prolyl hydroxylation and triglyceride transfer. The polypeptide is Protein disulfide-isomerase (PDI) (Medicago sativa (Alfalfa)).